The following is a 181-amino-acid chain: Crossover junction endodeoxyribonuclease RuvC (181 aa).

Catalysis depends on residues Asp7, Glu67, and Asp139. Residues Asp7, Glu67, and Asp139 each contribute to the Mg(2+) site.

This sequence belongs to the RuvC family. As to quaternary structure, homodimer which binds Holliday junction (HJ) DNA. The HJ becomes 2-fold symmetrical on binding to RuvC with unstacked arms; it has a different conformation from HJ DNA in complex with RuvA. In the full resolvosome a probable DNA-RuvA(4)-RuvB(12)-RuvC(2) complex forms which resolves the HJ. The cofactor is Mg(2+).

It localises to the cytoplasm. It catalyses the reaction Endonucleolytic cleavage at a junction such as a reciprocal single-stranded crossover between two homologous DNA duplexes (Holliday junction).. The RuvA-RuvB-RuvC complex processes Holliday junction (HJ) DNA during genetic recombination and DNA repair. Endonuclease that resolves HJ intermediates. Cleaves cruciform DNA by making single-stranded nicks across the HJ at symmetrical positions within the homologous arms, yielding a 5'-phosphate and a 3'-hydroxyl group; requires a central core of homology in the junction. The consensus cleavage sequence is 5'-(A/T)TT(C/G)-3'. Cleavage occurs on the 3'-side of the TT dinucleotide at the point of strand exchange. HJ branch migration catalyzed by RuvA-RuvB allows RuvC to scan DNA until it finds its consensus sequence, where it cleaves and resolves the cruciform DNA. This Cupriavidus pinatubonensis (strain JMP 134 / LMG 1197) (Cupriavidus necator (strain JMP 134)) protein is Crossover junction endodeoxyribonuclease RuvC.